The primary structure comprises 387 residues: 3-ketoacyl-CoA thiolase (387 aa).

Cysteine 91 acts as the Acyl-thioester intermediate in catalysis. Active-site proton acceptor residues include histidine 343 and cysteine 373.

The protein belongs to the thiolase-like superfamily. Thiolase family. Heterotetramer of two alpha chains (FadB) and two beta chains (FadA).

It is found in the cytoplasm. It carries out the reaction an acyl-CoA + acetyl-CoA = a 3-oxoacyl-CoA + CoA. It functions in the pathway lipid metabolism; fatty acid beta-oxidation. Catalyzes the final step of fatty acid oxidation in which acetyl-CoA is released and the CoA ester of a fatty acid two carbons shorter is formed. In Cronobacter sakazakii (strain ATCC BAA-894) (Enterobacter sakazakii), this protein is 3-ketoacyl-CoA thiolase.